A 262-amino-acid chain; its full sequence is Intercellular adhesion molecule 4 (262 aa).

The signal sequence occupies residues 1-22; sequence MESALLLPSLLLVAAYPRGGSP. Over 23 to 231 the chain is Extracellular; sequence QQEWMQSPPA…LTVLALSPAS (209 aa). 2 Ig-like C2-type domains span residues 54–116 and 138–209; these read GGSA…TREA and GHKY…LNLD. Asn60, Asn84, and Asn182 each carry an N-linked (GlcNAc...) asparagine glycan. 4 disulfide bridges follow: Cys61–Cys105, Cys61–Cys109, Cys65–Cys109, and Cys145–Cys202. The chain crosses the membrane as a helical span at residues 232-252; sequence IALASTSIATLVGILLAVGAV. The Cytoplasmic segment spans residues 253–262; the sequence is YVRKYLAVQT.

The protein belongs to the immunoglobulin superfamily. ICAM family.

It localises to the cell membrane. The protein localises to the secreted. Functionally, adhesion molecule that binds to leukocyte adhesion LFA-1 protein LFA-1 (integrin alpha-L/beta-2). ICAM4 is also a ligand for alpha-4/beta-1 and alpha-V integrins. Isoform 2 may modulate binding of membrane-associated ICAM4. The sequence is that of Intercellular adhesion molecule 4 (Icam4) from Mus musculus (Mouse).